Reading from the N-terminus, the 192-residue chain is Phosphoheptose isomerase (192 aa).

Residues 37-192 (IAASLRDGGK…IMLIEKELAV (156 aa)) enclose the SIS domain. Position 52 to 54 (52 to 54 (NGG)) interacts with substrate. His-61 and Glu-65 together coordinate Zn(2+). Substrate-binding positions include Glu-65, 93–94 (ND), 119–121 (STS), Ser-124, and Gln-172. Zn(2+) is bound by residues Gln-172 and His-180.

The protein belongs to the SIS family. GmhA subfamily. As to quaternary structure, homotetramer. The cofactor is Zn(2+).

It is found in the cytoplasm. It catalyses the reaction 2 D-sedoheptulose 7-phosphate = D-glycero-alpha-D-manno-heptose 7-phosphate + D-glycero-beta-D-manno-heptose 7-phosphate. It functions in the pathway carbohydrate biosynthesis; D-glycero-D-manno-heptose 7-phosphate biosynthesis; D-glycero-alpha-D-manno-heptose 7-phosphate and D-glycero-beta-D-manno-heptose 7-phosphate from sedoheptulose 7-phosphate: step 1/1. In terms of biological role, catalyzes the isomerization of sedoheptulose 7-phosphate in D-glycero-D-manno-heptose 7-phosphate. The protein is Phosphoheptose isomerase of Tolumonas auensis (strain DSM 9187 / NBRC 110442 / TA 4).